A 207-amino-acid chain; its full sequence is Holliday junction branch migration complex subunit RuvA (207 aa).

Residues 1 to 64 (MIGLINGQVQ…EDAQLLYGFI (64 aa)) form a domain I region. A domain II region spans residues 65–143 (DRKERDVFRQ…NIEVDSSHLE (79 aa)). Positions 144-152 (FAMQPAPIS) are flexible linker. Residues 153–207 (AEGSIIAEVEGALISLGYKEREAQQAIKAAKSNGETFADTQSLLKATLQQFQSFK) form a domain III region.

It belongs to the RuvA family. Homotetramer. Forms an RuvA(8)-RuvB(12)-Holliday junction (HJ) complex. HJ DNA is sandwiched between 2 RuvA tetramers; dsDNA enters through RuvA and exits via RuvB. An RuvB hexamer assembles on each DNA strand where it exits the tetramer. Each RuvB hexamer is contacted by two RuvA subunits (via domain III) on 2 adjacent RuvB subunits; this complex drives branch migration. In the full resolvosome a probable DNA-RuvA(4)-RuvB(12)-RuvC(2) complex forms which resolves the HJ.

It is found in the cytoplasm. The RuvA-RuvB-RuvC complex processes Holliday junction (HJ) DNA during genetic recombination and DNA repair, while the RuvA-RuvB complex plays an important role in the rescue of blocked DNA replication forks via replication fork reversal (RFR). RuvA specifically binds to HJ cruciform DNA, conferring on it an open structure. The RuvB hexamer acts as an ATP-dependent pump, pulling dsDNA into and through the RuvAB complex. HJ branch migration allows RuvC to scan DNA until it finds its consensus sequence, where it cleaves and resolves the cruciform DNA. The polypeptide is Holliday junction branch migration complex subunit RuvA (Psychrobacter cryohalolentis (strain ATCC BAA-1226 / DSM 17306 / VKM B-2378 / K5)).